The chain runs to 84 residues: Small ribosomal subunit protein bS16 (84 aa).

Belongs to the bacterial ribosomal protein bS16 family.

In Paraburkholderia phytofirmans (strain DSM 17436 / LMG 22146 / PsJN) (Burkholderia phytofirmans), this protein is Small ribosomal subunit protein bS16.